Reading from the N-terminus, the 213-residue chain is Imidazole glycerol phosphate synthase subunit HisH (213 aa).

In terms of domain architecture, Glutamine amidotransferase type-1 spans 3–213 (MIGVIDYGMG…VGIVTGRENG (211 aa)). Residue cysteine 81 is the Nucleophile of the active site. Catalysis depends on residues histidine 188 and glutamate 190.

Heterodimer of HisH and HisF.

The protein localises to the cytoplasm. It catalyses the reaction 5-[(5-phospho-1-deoxy-D-ribulos-1-ylimino)methylamino]-1-(5-phospho-beta-D-ribosyl)imidazole-4-carboxamide + L-glutamine = D-erythro-1-(imidazol-4-yl)glycerol 3-phosphate + 5-amino-1-(5-phospho-beta-D-ribosyl)imidazole-4-carboxamide + L-glutamate + H(+). The enzyme catalyses L-glutamine + H2O = L-glutamate + NH4(+). Its pathway is amino-acid biosynthesis; L-histidine biosynthesis; L-histidine from 5-phospho-alpha-D-ribose 1-diphosphate: step 5/9. IGPS catalyzes the conversion of PRFAR and glutamine to IGP, AICAR and glutamate. The HisH subunit catalyzes the hydrolysis of glutamine to glutamate and ammonia as part of the synthesis of IGP and AICAR. The resulting ammonia molecule is channeled to the active site of HisF. This chain is Imidazole glycerol phosphate synthase subunit HisH, found in Geobacillus thermodenitrificans (strain NG80-2).